We begin with the raw amino-acid sequence, 3332 residues long: Nonribosomal peptide synthetase imqB (3332 aa).

Residues 230–622 (FSEQVKAHPG…IGRKDTQVKV (393 aa)) are adenylation 1. Residues 764 to 846 (GRITPQEKLL…DMARCITRVD (83 aa)) form the Carrier 1 domain. At Ser-801 the chain carries O-(pantetheine 4'-phosphoryl)serine. The interval 886 to 1314 (DIYPCTPLQE…NCLTRKELHQ (429 aa)) is condensation 1. An adenylation 2 region spans residues 1336–1740 (EVSNTRPTAP…GRKDRQLKVR (405 aa)). One can recognise a Carrier 2 domain in the interval 1880–1954 (AIATPKEEKL…EMAEKAAETG (75 aa)). Ser-1915 is subject to O-(pantetheine 4'-phosphoryl)serine. Positions 1992-2402 (EDIYPCTPLQ…CLSEIDTQQI (411 aa)) are condensation 2. The segment at 2422–2819 (AQQAREHPAT…GRKDTQVKIR (398 aa)) is adenylation 3. Positions 2963–3039 (EVATNDEAAV…DLASRIGRVE (77 aa)) constitute a Carrier 3 domain. At Ser-3000 the chain carries O-(pantetheine 4'-phosphoryl)serine. The interval 3058–3323 (SSNPTLIQGQ…ETTRHIRDFC (266 aa)) is thioesterase (TE) domain.

Belongs to the NRP synthetase family.

It participates in secondary metabolite biosynthesis. In terms of biological role, nonribosomal peptide synthetase; part of the gene cluster that mediates the biosynthesis of imizoquins A to D, tripeptide-derived alkaloids that serve a protective role against oxidative stress that are essential for normal germination. ImqB is a canonical three-module NRPS that assembles the tripeptide backbone of the imizoquins via condensation of Trp, Tyr, and Leu-derived precursors. N-methylation by imqF and phenol oxidation by imqC, followed by cyclization via the FAD-dependent oxidase imqH carry out the three-step transformation of L-tyrosine into tetrahydroisoquinoline. Importantly, this sequence requires the presence of a free amine in the tyrosine moiety, indicating that isoquinoline formation occurs prior to peptide bond formation. The imidazolidin-4-one ring of imizoquins could form following additional oxidation of the methyl-derived bridgehead carbon by imqH. Lastly, O-methylation by imqG and leucine hydroxylation by imqE complete biosynthesis of the imizoquins. This chain is Nonribosomal peptide synthetase imqB, found in Aspergillus flavus (strain ATCC 200026 / FGSC A1120 / IAM 13836 / NRRL 3357 / JCM 12722 / SRRC 167).